The sequence spans 168 residues: N-alpha-acetyltransferase (168 aa).

In terms of domain architecture, N-acetyltransferase spans 13–168 (YQIRLATLSD…EDAYLMAAPL (156 aa)). Y38 is a substrate binding site. H89 is a Zn(2+) binding site. Residues 93-95 (IAV) and 101-106 (KIGVGT) each bind acetyl-CoA. Residues 93 to 95 (IAV) and 101 to 106 (KIGVGT) contribute to the CoA site. A Zn(2+)-binding site is contributed by E128. Residues N133 and 140–142 (YKK) each bind acetyl-CoA. N133 contacts CoA. Y155 provides a ligand contact to substrate.

This sequence belongs to the acetyltransferase family. ARD1 subfamily. Homodimer.

It is found in the cytoplasm. It catalyses the reaction N-terminal L-alanyl-[protein] + acetyl-CoA = N-terminal N(alpha)-acetyl-L-alanyl-[protein] + CoA + H(+). The catalysed reaction is N-terminal L-seryl-[protein] + acetyl-CoA = N-terminal N(alpha)-acetyl-L-seryl-[protein] + CoA + H(+). The enzyme catalyses N-terminal L-methionyl-L-leucyl-[protein] + acetyl-CoA = N-terminal N(alpha)-acetyl-L-methionyl-L-leucyl-[protein] + CoA + H(+). It carries out the reaction N-terminal L-methionyl-L-glutamyl-[protein] + acetyl-CoA = N-terminal N(alpha)-acetyl-L-methionyl-L-glutamyl-[protein] + CoA + H(+). Functionally, displays alpha (N-terminal) acetyltransferase activity. Catalyzes the covalent attachment of an acetyl moiety from acetyl-CoA to the free alpha-amino group at the N-terminus of a protein. This chain is N-alpha-acetyltransferase, found in Sulfolobus acidocaldarius (strain ATCC 33909 / DSM 639 / JCM 8929 / NBRC 15157 / NCIMB 11770).